A 494-amino-acid chain; its full sequence is uncharacterized protein (494 aa).

A 2Fe-2S ferredoxin-type domain is found at 4 to 82 (FTITVKKTEG…NMIIEPLEGF (79 aa)). Cys-46, Cys-51, Cys-54, and Cys-66 together coordinate [2Fe-2S] cluster. 2 consecutive 4Fe-4S ferredoxin-type domains span residues 127–157 (DLKD…NYPG) and 178–208 (EKEA…IVHN). [4Fe-4S] cluster is bound by residues Cys-137, Cys-140, Cys-143, Cys-147, Cys-189, Cys-192, Cys-195, and Cys-199.

It belongs to the succinate dehydrogenase/fumarate reductase iron-sulfur protein family.

This is an uncharacterized protein from Methanococcus maripaludis (strain DSM 14266 / JCM 13030 / NBRC 101832 / S2 / LL).